Consider the following 224-residue polypeptide: Deoxyribose-phosphate aldolase (224 aa).

The active-site Proton donor/acceptor is Asp98. Lys159 serves as the catalytic Schiff-base intermediate with acetaldehyde. Residue Lys189 is the Proton donor/acceptor of the active site.

This sequence belongs to the DeoC/FbaB aldolase family. DeoC type 1 subfamily.

It is found in the cytoplasm. It catalyses the reaction 2-deoxy-D-ribose 5-phosphate = D-glyceraldehyde 3-phosphate + acetaldehyde. It functions in the pathway carbohydrate degradation; 2-deoxy-D-ribose 1-phosphate degradation; D-glyceraldehyde 3-phosphate and acetaldehyde from 2-deoxy-alpha-D-ribose 1-phosphate: step 2/2. Catalyzes a reversible aldol reaction between acetaldehyde and D-glyceraldehyde 3-phosphate to generate 2-deoxy-D-ribose 5-phosphate. In Methanothermobacter thermautotrophicus (strain ATCC 29096 / DSM 1053 / JCM 10044 / NBRC 100330 / Delta H) (Methanobacterium thermoautotrophicum), this protein is Deoxyribose-phosphate aldolase.